The sequence spans 702 residues: Elongation factor G (702 aa).

One can recognise a tr-type G domain in the interval 8 to 196 (ERYRNIGISA…MKAIIWDEAS (189 aa)). Residues 17 to 24 (AHIDAGKT), 88 to 92 (DTPGH), and 142 to 145 (NKMD) each bind GTP.

It belongs to the TRAFAC class translation factor GTPase superfamily. Classic translation factor GTPase family. EF-G/EF-2 subfamily.

It localises to the cytoplasm. Its function is as follows. Catalyzes the GTP-dependent ribosomal translocation step during translation elongation. During this step, the ribosome changes from the pre-translocational (PRE) to the post-translocational (POST) state as the newly formed A-site-bound peptidyl-tRNA and P-site-bound deacylated tRNA move to the P and E sites, respectively. Catalyzes the coordinated movement of the two tRNA molecules, the mRNA and conformational changes in the ribosome. In Thiomonas delicata (Thiomonas cuprina), this protein is Elongation factor G (fusA).